Reading from the N-terminus, the 324-residue chain is Zinc transporter ZIP1 (324 aa).

Over 1–30 the chain is Extracellular; that stretch reads MGPWGEPELLVWRPEAVASEPSVPVGLEVK. A helical membrane pass occupies residues 31–51; that stretch reads LGALVLLLLLTLICSLVPVCV. Over 52–68 the chain is Cytoplasmic; that stretch reads LRRSGANHEASASGQKA. Residues 69–89 form a helical membrane-spanning segment; it reads LSLVSCFAGGVFLATCLLDLL. Residues 90–104 lie on the Extracellular side of the membrane; the sequence is PDYLAAIDEALEALH. Residues 105–125 form a helical membrane-spanning segment; that stretch reads VTLQFPLQEFILAMGFFLVLV. Residues 126–179 are Cytoplasmic-facing; the sequence is MEQITLAYKEQTSPPHPEETRALLGTVNGGPQHWHDGPGIPQAGGTPAAPSALR. Residues 180-200 traverse the membrane as a helical segment; the sequence is ACVLVFSLALHSVFEGLAVGL. Residues 201–206 are Extracellular-facing; that stretch reads QRDRAR. The chain crosses the membrane as a helical span at residues 207 to 227; the sequence is AMELCLALLLHKGILAVSLSL. At 228–237 the chain is on the cytoplasmic side; sequence RLLQSHLRVQ. The chain crosses the membrane as a helical span at residues 238–258; that stretch reads VVAGCGILFSCMTPLGIGLGA. Topologically, residues 259 to 272 are extracellular; sequence ALAESAGPLHQLAQ. The chain crosses the membrane as a helical span at residues 273–293; it reads SVLEGMAAGTFLYITFLEILP. At 294–303 the chain is on the cytoplasmic side; it reads QELATSEQRI. A helical membrane pass occupies residues 304 to 324; it reads LKVILLLAGFALLTGLLFVQI.

It belongs to the ZIP transporter (TC 2.A.5) family. In terms of tissue distribution, ubiquitous, except in the pancreas. Highest levels seen in kidney, salivary gland and placenta.

The protein localises to the cell membrane. It localises to the endoplasmic reticulum membrane. The catalysed reaction is Zn(2+)(in) = Zn(2+)(out). Functionally, transporter for the divalent cation Zn(2+). Mediates the influx of Zn(2+) into cells from extracellular space. The protein is Zinc transporter ZIP1 (Slc39a1) of Mus musculus (Mouse).